Consider the following 368-residue polypeptide: tRNA-specific 2-thiouridylase MnmA (368 aa).

Residues 12 to 19 (AMSGGVDS) and methionine 38 contribute to the ATP site. Positions 98–100 (NPD) are interaction with target base in tRNA. The Nucleophile role is filled by cysteine 103. Residues cysteine 103 and cysteine 200 are joined by a disulfide bond. Position 128 (glycine 128) interacts with ATP. Positions 150–152 (KDQ) are interaction with tRNA. Cysteine 200 (cysteine persulfide intermediate) is an active-site residue. The interaction with tRNA stretch occupies residues 312-313 (RY).

The protein belongs to the MnmA/TRMU family. Interacts with TusE.

It localises to the cytoplasm. It carries out the reaction S-sulfanyl-L-cysteinyl-[protein] + uridine(34) in tRNA + AH2 + ATP = 2-thiouridine(34) in tRNA + L-cysteinyl-[protein] + A + AMP + diphosphate + H(+). Functionally, catalyzes the 2-thiolation of uridine at the wobble position (U34) of tRNA(Lys), tRNA(Glu) and tRNA(Gln), leading to the formation of s(2)U34, the first step of tRNA-mnm(5)s(2)U34 synthesis. Sulfur is provided by IscS, via a sulfur-relay system. Binds ATP and its substrate tRNAs. In Buchnera aphidicola subsp. Acyrthosiphon pisum (strain APS) (Acyrthosiphon pisum symbiotic bacterium), this protein is tRNA-specific 2-thiouridylase MnmA.